The following is a 466-amino-acid chain: Ras-GEF domain-containing family member 1C (466 aa).

Disordered regions lie at residues 1-35 (MPRTLTASDMVTPGSLSPPPTESTEGEQAGQPLLD) and 443-466 (SESPESQTEKERWKSLRSSILGKT). One can recognise an N-terminal Ras-GEF domain in the interval 34–164 (LDGAPSSASL…LLQTLHQKLA (131 aa)). In terms of domain architecture, Ras-GEF spans 200–446 (DPYTLAQQLT…YLASYESESP (247 aa)).

In terms of biological role, guanine nucleotide exchange factor (GEF). The polypeptide is Ras-GEF domain-containing family member 1C (Rasgef1c) (Mus musculus (Mouse)).